Consider the following 204-residue polypeptide: General odorant-binding protein 67 (204 aa).

The N-terminal stretch at 1–22 (MNPVVCAFGVIFVVVTLELVVA) is a signal peptide. Cystine bridges form between Cys57–Cys85, Cys81–Cys147, and Cys128–Cys157.

This sequence belongs to the PBP/GOBP family.

It localises to the secreted. Functionally, present in the aqueous fluid surrounding olfactory sensory dendrites and are thought to aid in the capture and transport of hydrophobic odorants into and through this fluid. This Anopheles gambiae (African malaria mosquito) protein is General odorant-binding protein 67 (Obp67).